Consider the following 651-residue polypeptide: Carboxypeptidase S1 homolog A (651 aa).

Residues 1 to 19 form the signal peptide; it reads MHLATGLAVALPFIGAASA. Cys50 and Cys121 are joined by a disulfide. N-linked (GlcNAc...) asparagine glycans are attached at residues Asn77, Asn125, Asn128, Asn161, Asn184, and Asn202. The active site involves Ser238. 5 N-linked (GlcNAc...) asparagine glycosylation sites follow: Asn260, Asn299, Asn308, Asn347, and Asn410. 2 disulfide bridges follow: Cys325–Cys361 and Cys332–Cys354. Asp458 is an active-site residue. Cys461 provides a ligand contact to substrate. N-linked (GlcNAc...) asparagine glycosylation is found at Asn474 and Asn504. Residue His515 is part of the active site. Glu516 contributes to the substrate binding site. A disordered region spans residues 604–630; it reads KSPAGKKQGPPPTSTSPPSPTSSSEGS. Residues 612–623 show a composition bias toward pro residues; the sequence is GPPPTSTSPPSP. Ser625 carries the GPI-anchor amidated serine lipid modification. Positions 626-651 are cleaved as a propeptide — removed in mature form; the sequence is SSEGSVKEFSVSVLGVSVLAAITFFL.

Belongs to the peptidase S10 family.

It localises to the cell membrane. The catalysed reaction is Preferential release of a C-terminal arginine or lysine residue.. Its function is as follows. Extracellular serine carboxypeptidase that contributes to pathogenicity. The protein is Carboxypeptidase S1 homolog A (SCPA) of Arthroderma otae (strain ATCC MYA-4605 / CBS 113480) (Microsporum canis).